An 878-amino-acid polypeptide reads, in one-letter code: Alanine--tRNA ligase (878 aa).

4 residues coordinate Zn(2+): His567, His571, Cys669, and His673. Residues 841–860 form a disordered region; it reads AVGGKGGGRPDMAEAGGKDP.

Belongs to the class-II aminoacyl-tRNA synthetase family. The cofactor is Zn(2+).

The protein resides in the cytoplasm. It carries out the reaction tRNA(Ala) + L-alanine + ATP = L-alanyl-tRNA(Ala) + AMP + diphosphate. Functionally, catalyzes the attachment of alanine to tRNA(Ala) in a two-step reaction: alanine is first activated by ATP to form Ala-AMP and then transferred to the acceptor end of tRNA(Ala). Also edits incorrectly charged Ser-tRNA(Ala) and Gly-tRNA(Ala) via its editing domain. The polypeptide is Alanine--tRNA ligase (Solibacter usitatus (strain Ellin6076)).